The chain runs to 140 residues: Arsenate reductase (140 aa).

The active-site Nucleophile; cysteine thioarsenate intermediate is the Cys-11.

It belongs to the ArsC family.

It carries out the reaction [glutaredoxin]-dithiol + arsenate + glutathione + H(+) = glutathionyl-S-S-[glutaredoxin] + arsenite + H2O. Involved in resistance to arsenate. Catalyzes the reduction of arsenate [As(V)] to arsenite [As(III)]. The resulting arsenite is then extruded from the cell via the aquaglyceroporin AqpS. Does not display antimonate reductase activity. The chain is Arsenate reductase from Rhizobium meliloti (strain 1021) (Ensifer meliloti).